Reading from the N-terminus, the 258-residue chain is Trans-aconitate 2-methyltransferase (258 aa).

Belongs to the methyltransferase superfamily. Tam family.

The protein localises to the cytoplasm. The catalysed reaction is trans-aconitate + S-adenosyl-L-methionine = (E)-3-(methoxycarbonyl)pent-2-enedioate + S-adenosyl-L-homocysteine. Functionally, catalyzes the S-adenosylmethionine monomethyl esterification of trans-aconitate. The sequence is that of Trans-aconitate 2-methyltransferase from Methylobacterium nodulans (strain LMG 21967 / CNCM I-2342 / ORS 2060).